We begin with the raw amino-acid sequence, 93 residues long: CRISPR-associated endoribonuclease Cas2 (93 aa).

Position 8 (aspartate 8) interacts with Mg(2+).

It belongs to the CRISPR-associated endoribonuclease Cas2 protein family. In terms of assembly, homodimer, forms a heterotetramer with a Cas1 homodimer. Mg(2+) serves as cofactor.

CRISPR (clustered regularly interspaced short palindromic repeat), is an adaptive immune system that provides protection against mobile genetic elements (viruses, transposable elements and conjugative plasmids). CRISPR clusters contain sequences complementary to antecedent mobile elements and target invading nucleic acids. CRISPR clusters are transcribed and processed into CRISPR RNA (crRNA). Functions as a ssRNA-specific endoribonuclease. Involved in the integration of spacer DNA into the CRISPR cassette. This is CRISPR-associated endoribonuclease Cas2 from Thermofilum pendens (strain DSM 2475 / Hrk 5).